A 124-amino-acid polypeptide reads, in one-letter code: MTTVNQLVRNARPTKTFKSNVPALGACPQKRGVCVRVYTTTPKKPNSALRKVCRVRLTNGLEVTSYIGGEGHNLQEHASILIRGGRVKDLPGVRYHVVRGALDCAGVHSRKKSRSKYGTKQPKS.

Asp-89 bears the 3-methylthioaspartic acid mark.

The protein belongs to the universal ribosomal protein uS12 family. In terms of assembly, part of the 30S ribosomal subunit. Contacts proteins S8 and S17. May interact with IF1 in the 30S initiation complex.

With S4 and S5 plays an important role in translational accuracy. Its function is as follows. Interacts with and stabilizes bases of the 16S rRNA that are involved in tRNA selection in the A site and with the mRNA backbone. Located at the interface of the 30S and 50S subunits, it traverses the body of the 30S subunit contacting proteins on the other side and probably holding the rRNA structure together. The combined cluster of proteins S8, S12 and S17 appears to hold together the shoulder and platform of the 30S subunit. The sequence is that of Small ribosomal subunit protein uS12 from Blochmanniella pennsylvanica (strain BPEN).